The following is a 414-amino-acid chain: Serine hydroxymethyltransferase (414 aa).

(6S)-5,6,7,8-tetrahydrofolate contacts are provided by residues L121 and 125 to 127 (GHL). K229 bears the N6-(pyridoxal phosphate)lysine mark.

The protein belongs to the SHMT family. Homodimer. The cofactor is pyridoxal 5'-phosphate.

It localises to the cytoplasm. It carries out the reaction (6R)-5,10-methylene-5,6,7,8-tetrahydrofolate + glycine + H2O = (6S)-5,6,7,8-tetrahydrofolate + L-serine. It functions in the pathway one-carbon metabolism; tetrahydrofolate interconversion. The protein operates within amino-acid biosynthesis; glycine biosynthesis; glycine from L-serine: step 1/1. Its function is as follows. Catalyzes the reversible interconversion of serine and glycine with tetrahydrofolate (THF) serving as the one-carbon carrier. This reaction serves as the major source of one-carbon groups required for the biosynthesis of purines, thymidylate, methionine, and other important biomolecules. Also exhibits THF-independent aldolase activity toward beta-hydroxyamino acids, producing glycine and aldehydes, via a retro-aldol mechanism. The polypeptide is Serine hydroxymethyltransferase (Polynucleobacter necessarius subsp. necessarius (strain STIR1)).